The chain runs to 341 residues: UDP-3-O-(3-hydroxymyristoyl)glucosamine N-acyltransferase (341 aa).

His239 serves as the catalytic Proton acceptor.

The protein belongs to the transferase hexapeptide repeat family. LpxD subfamily. In terms of assembly, homotrimer.

It carries out the reaction a UDP-3-O-[(3R)-3-hydroxyacyl]-alpha-D-glucosamine + a (3R)-hydroxyacyl-[ACP] = a UDP-2-N,3-O-bis[(3R)-3-hydroxyacyl]-alpha-D-glucosamine + holo-[ACP] + H(+). The enzyme catalyses UDP-3-O-[(3R)-3-hydroxytetradecanoyl]-alpha-D-glucosamine + (3R)-hydroxytetradecanoyl-[ACP] = UDP-2-N,3-O-bis[(3R)-3-hydroxytetradecanoyl]-alpha-D-glucosamine + holo-[ACP] + H(+). Its pathway is glycolipid biosynthesis; lipid IV(A) biosynthesis; lipid IV(A) from (3R)-3-hydroxytetradecanoyl-[acyl-carrier-protein] and UDP-N-acetyl-alpha-D-glucosamine: step 3/6. Catalyzes the N-acylation of UDP-3-O-(hydroxytetradecanoyl)glucosamine using 3-hydroxytetradecanoyl-ACP as the acyl donor. Is involved in the biosynthesis of lipid A, a phosphorylated glycolipid that anchors the lipopolysaccharide to the outer membrane of the cell. This is UDP-3-O-(3-hydroxymyristoyl)glucosamine N-acyltransferase from Escherichia coli O157:H7.